The primary structure comprises 344 residues: Dihydroorotase (344 aa).

Residues H13 and H15 each coordinate Zn(2+). Residues 15–17 and N41 contribute to the substrate site; that span reads HLR. The Zn(2+) site is built by K98, H135, and H173. K98 bears the N6-carboxylysine mark. H135 contacts substrate. L218 contributes to the substrate binding site. D247 serves as a coordination point for Zn(2+). The active site involves D247. Substrate-binding residues include H251 and A263.

The protein belongs to the metallo-dependent hydrolases superfamily. DHOase family. Class II DHOase subfamily. As to quaternary structure, homodimer. Zn(2+) serves as cofactor.

It carries out the reaction (S)-dihydroorotate + H2O = N-carbamoyl-L-aspartate + H(+). Its pathway is pyrimidine metabolism; UMP biosynthesis via de novo pathway; (S)-dihydroorotate from bicarbonate: step 3/3. Its function is as follows. Catalyzes the reversible cyclization of carbamoyl aspartate to dihydroorotate. This is Dihydroorotase from Neisseria gonorrhoeae (strain NCCP11945).